A 160-amino-acid chain; its full sequence is Peptidyl-prolyl cis-trans isomerase CYP18-1 (160 aa).

A PPIase cyclophilin-type domain is found at 3-153; the sequence is VTLHTNLGDI…AEIRLNRVTI (151 aa).

Belongs to the cyclophilin-type PPIase family. As to expression, ubiquitous.

It localises to the cytoplasm. It carries out the reaction [protein]-peptidylproline (omega=180) = [protein]-peptidylproline (omega=0). Its function is as follows. PPIases accelerate the folding of proteins. It catalyzes the cis-trans isomerization of proline imidic peptide bonds in oligopeptides. The chain is Peptidyl-prolyl cis-trans isomerase CYP18-1 (CYP18-1) from Arabidopsis thaliana (Mouse-ear cress).